The primary structure comprises 59 residues: Large ribosomal subunit protein bL32 (59 aa).

The segment at 1–20 is disordered; that stretch reads MAVQQNKKSKSKKGMRRSHD. Basic residues predominate over residues 7–19; sequence KKSKSKKGMRRSH.

It belongs to the bacterial ribosomal protein bL32 family.

The polypeptide is Large ribosomal subunit protein bL32 (Nitratidesulfovibrio vulgaris (strain DSM 19637 / Miyazaki F) (Desulfovibrio vulgaris)).